A 345-amino-acid polypeptide reads, in one-letter code: Phosphate acyltransferase (345 aa).

This sequence belongs to the PlsX family. In terms of assembly, homodimer. Probably interacts with PlsY.

It is found in the cytoplasm. It carries out the reaction a fatty acyl-[ACP] + phosphate = an acyl phosphate + holo-[ACP]. Its pathway is lipid metabolism; phospholipid metabolism. Functionally, catalyzes the reversible formation of acyl-phosphate (acyl-PO(4)) from acyl-[acyl-carrier-protein] (acyl-ACP). This enzyme utilizes acyl-ACP as fatty acyl donor, but not acyl-CoA. The sequence is that of Phosphate acyltransferase from Limosilactobacillus fermentum (strain NBRC 3956 / LMG 18251) (Lactobacillus fermentum).